The following is a 50-amino-acid chain: Large ribosomal subunit protein bL33A (50 aa).

Belongs to the bacterial ribosomal protein bL33 family.

The chain is Large ribosomal subunit protein bL33A from Streptococcus thermophilus (strain CNRZ 1066).